The chain runs to 1139 residues: GRIP and coiled-coil domain-containing protein (1139 aa).

The tract at residues N366 to T388 is disordered. Over residues S369–N380 the composition is skewed to polar residues. Coiled coils occupy residues V472–E648 and L758–Q877. The segment at N1004–E1024 is disordered. Positions D1009–N1022 are enriched in low complexity. Residues Y1043–I1084 adopt a coiled-coil conformation. Residues I1084 to K1135 form the GRIP domain.

In Plasmodium falciparum (isolate 3D7), this protein is GRIP and coiled-coil domain-containing protein.